A 227-amino-acid chain; its full sequence is Cytochrome c oxidase subunit 2 (227 aa).

Topologically, residues 1–14 (MAHPAQLGLQDATS) are mitochondrial intermembrane. Residues 15-45 (PVMEELITFHDHALMAMSLISLLVLYALFST) form a helical membrane-spanning segment. Residues 46–59 (LTTKMTNTNITDAQ) lie on the Mitochondrial matrix side of the membrane. The helical transmembrane segment at 60 to 87 (EMETIWTILPAIILVLIAFPSLRILYMT) threads the bilayer. The Mitochondrial intermembrane portion of the chain corresponds to 88–227 (DEVNNPSFTI…IFEMGPVFTL (140 aa)). His-161, Cys-196, Glu-198, Cys-200, His-204, and Met-207 together coordinate Cu cation. Glu-198 contacts Mg(2+).

This sequence belongs to the cytochrome c oxidase subunit 2 family. In terms of assembly, component of the cytochrome c oxidase (complex IV, CIV), a multisubunit enzyme composed of 14 subunits. The complex is composed of a catalytic core of 3 subunits MT-CO1, MT-CO2 and MT-CO3, encoded in the mitochondrial DNA, and 11 supernumerary subunits COX4I, COX5A, COX5B, COX6A, COX6B, COX6C, COX7A, COX7B, COX7C, COX8 and NDUFA4, which are encoded in the nuclear genome. The complex exists as a monomer or a dimer and forms supercomplexes (SCs) in the inner mitochondrial membrane with NADH-ubiquinone oxidoreductase (complex I, CI) and ubiquinol-cytochrome c oxidoreductase (cytochrome b-c1 complex, complex III, CIII), resulting in different assemblies (supercomplex SCI(1)III(2)IV(1) and megacomplex MCI(2)III(2)IV(2)). Found in a complex with TMEM177, COA6, COX18, COX20, SCO1 and SCO2. Interacts with TMEM177 in a COX20-dependent manner. Interacts with COX20. Interacts with COX16. Cu cation is required as a cofactor.

It is found in the mitochondrion inner membrane. It catalyses the reaction 4 Fe(II)-[cytochrome c] + O2 + 8 H(+)(in) = 4 Fe(III)-[cytochrome c] + 2 H2O + 4 H(+)(out). Component of the cytochrome c oxidase, the last enzyme in the mitochondrial electron transport chain which drives oxidative phosphorylation. The respiratory chain contains 3 multisubunit complexes succinate dehydrogenase (complex II, CII), ubiquinol-cytochrome c oxidoreductase (cytochrome b-c1 complex, complex III, CIII) and cytochrome c oxidase (complex IV, CIV), that cooperate to transfer electrons derived from NADH and succinate to molecular oxygen, creating an electrochemical gradient over the inner membrane that drives transmembrane transport and the ATP synthase. Cytochrome c oxidase is the component of the respiratory chain that catalyzes the reduction of oxygen to water. Electrons originating from reduced cytochrome c in the intermembrane space (IMS) are transferred via the dinuclear copper A center (CU(A)) of subunit 2 and heme A of subunit 1 to the active site in subunit 1, a binuclear center (BNC) formed by heme A3 and copper B (CU(B)). The BNC reduces molecular oxygen to 2 water molecules using 4 electrons from cytochrome c in the IMS and 4 protons from the mitochondrial matrix. This is Cytochrome c oxidase subunit 2 (MT-CO2) from Mandrillus leucophaeus (Drill).